The following is a 190-amino-acid chain: Small ribosomal subunit protein eS7x (190 aa).

Met-1 is subject to N-acetylmethionine. A coiled-coil region spans residues 17 to 50; that stretch reads TECEEQVAQALFDLENTNQELKSELKDLYINQAV.

Belongs to the eukaryotic ribosomal protein eS7 family.

In Arabidopsis thaliana (Mouse-ear cress), this protein is Small ribosomal subunit protein eS7x (RPS7C).